We begin with the raw amino-acid sequence, 438 residues long: Putative ZDHHC-type palmitoyltransferase 7 (438 aa).

Residues Asn-12 and Asn-13 are each glycosylated (N-linked (GlcNAc...) asparagine). 2 helical membrane-spanning segments follow: residues 48 to 68 and 77 to 97; these read IFCL…GTIL and YFYL…YFLI. 3 N-linked (GlcNAc...) asparagine glycosylation sites follow: Asn-119, Asn-144, and Asn-157. Positions 183-239 are disordered; it reads EDSINDDTITTTTTTTTTTSTSTIPEISNDDDDNNNENNNDNVNNRNNNNSNGEKED. 2 stretches are compositionally biased toward low complexity: residues 190-206 and 218-234; these read TITT…TSTI and NENN…NNSN. Asn-231 is a glycosylation site (N-linked (GlcNAc...) asparagine). Residues 249 to 299 form the DHHC domain; sequence YFCKKCLVDIPLRTKHCVKCNRCVLKYDHHCVFIGGCVGLNNHKNFLLFLL. Transmembrane regions (helical) follow at residues 294-314 and 330-350; these read FLLF…IIVT and IAII…FALF. Asn-360 carries N-linked (GlcNAc...) asparagine glycosylation.

It belongs to the DHHC palmitoyltransferase family.

Its subcellular location is the membrane. It catalyses the reaction L-cysteinyl-[protein] + hexadecanoyl-CoA = S-hexadecanoyl-L-cysteinyl-[protein] + CoA. The chain is Putative ZDHHC-type palmitoyltransferase 7 from Dictyostelium discoideum (Social amoeba).